Here is a 205-residue protein sequence, read N- to C-terminus: FAS-associated death domain protein (205 aa).

A DED domain is found at 3-81 (PFLVLLHSLS…RHDLLQRLDD (79 aa)). Residues 97–181 (LQVAFDIVCD…LVADLVEEAQ (85 aa)) form the Death domain. Positions 181–205 (QESVSKSENMSPVLRDSTVSSSETP) are disordered. Position 191 is a phosphoserine (Ser-191).

As to quaternary structure, can self-associate. Component of the AIM2 PANoptosome complex, a multiprotein complex that drives inflammatory cell death (PANoptosis). Component of the death-induced signaling complex (DISC) composed of cell surface receptor FAS/CD95 or TNFRSF1A, adapter protein FADD and the CASP8 protease; recruitment of CASP8 to the complex is required for processing of CASP8 into the p18 and p10 subunits. Interacts (via death domain) with FAS (via death domain). Interacts directly (via DED domain) with NOL3 (via CARD domain); inhibits death-inducing signaling complex (DISC) assembly by inhibiting the increase in FAS-FADD binding induced by FAS activation. Interacts with CFLAR, PEA15 and MBD4. When phosphorylated, part of a complex containing HIPK3 and FAS. May interact with MAVS/IPS1. Interacts with MOCV v-CFLAR protein and PIDD1. Interacts with RIPK1 and TRADD. Interacts with stimulated TNFRSF10B. Interacts with DDX24.

The protein resides in the cytoplasm. Its function is as follows. Apoptotic adapter molecule that recruits caspases CASP8 or CASP10 to the activated FAS/CD95 or TNFRSF1A/TNFR-1 receptors. The resulting aggregate called the death-inducing signaling complex (DISC) performs CASP8 proteolytic activation. Active CASP8 initiates the subsequent cascade of caspases mediating apoptosis. Involved in interferon-mediated antiviral immune response, playing a role in the positive regulation of interferon signaling. The polypeptide is FAS-associated death domain protein (Mus musculus (Mouse)).